Reading from the N-terminus, the 99-residue chain is Acylphosphatase (99 aa).

Positions 14 to 99 (AVDVTVTGRV…DQGLRSFGVR (86 aa)) constitute an Acylphosphatase-like domain. Active-site residues include Arg-29 and Asn-47.

This sequence belongs to the acylphosphatase family.

It carries out the reaction an acyl phosphate + H2O = a carboxylate + phosphate + H(+). This is Acylphosphatase (acyP) from Nocardioides sp. (strain ATCC BAA-499 / JS614).